The following is a 310-amino-acid chain: Aminoacyl tRNA synthase complex-interacting multifunctional protein 1 (310 aa).

At Ala-2 the chain carries N-acetylalanine. Residues 6–46 (AVLKRLEQKGAEADQIIEYLKQQVALLKEKAILQATMREEK) are required for fibroblast proliferation. An interaction with HSP90B1 region spans residues 54 to 192 (KLKKEIEELK…APRTVVSGLV (139 aa)). Polar residues predominate over residues 92–110 (ASESVVQSPSVATTASPAT). The disordered stretch occupies residues 92-147 (ASESVVQSPSVATTASPATKEQIKAGEEKKVKEKTEKKGEKKEKQQSAAASTDSKP). Residues 101–115 (SVATTASPATKEQIK) form a required for endothelial cell death region. The span at 112-136 (EQIKAGEEKKVKEKTEKKGEKKEKQ) shows a compositional bias: basic and acidic residues. The tract at residues 115-190 (KAGEEKKVKE…EAAPRTVVSG (76 aa)) is required for endothelial cell migration. A Phosphoserine modification is found at Ser-138. One can recognise a tRNA-binding domain in the interval 149 to 250 (DASRLDLRIG…NGSVPGDRIT (102 aa)). Lys-267 is modified (N6-succinyllysine).

In terms of assembly, homodimer. Part of the multisynthetase complex (MSC), a multisubunit complex that groups tRNA ligases for Arg (RARS1), Asp (DARS1), Gln (QARS1), Ile (IARS1), Leu (LARS1), Lys (KARS1), Met (MARS1) the bifunctional ligase for Glu and Pro (EPRS1) and the auxiliary subunits AIMP1/p43, AIMP2/p38 and EEF1E1/p18. Interacts (via N-terminus) with RARS1 (via N-terminus). Part of a complex composed of RARS1, QARS1 and AIMP1. Interacts (via C-terminus) with SMURF2. Interacts (via N-terminus) with HSP90B1/gp96 (via C-terminus). Interacts with PSMA7. Interacts with TARS3. Post-translationally, cleaved by caspase-7 in response to apoptosis to produce EMAP-II. As to expression, highly expressed in salivary glands and pancreatic alpha cells in the adult (at protein level). In the embryo, expressed primarily at sites of tissue remodeling such as ganglia, developing bones and teeth.

The protein localises to the nucleus. It localises to the cytoplasm. Its subcellular location is the cytosol. The protein resides in the secreted. It is found in the endoplasmic reticulum. The protein localises to the golgi apparatus. Functionally, non-catalytic component of the multisynthase complex. Stimulates the catalytic activity of cytoplasmic arginyl-tRNA synthase. Binds tRNA. Possesses inflammatory cytokine activity. Negatively regulates TGF-beta signaling through stabilization of SMURF2 by binding to SMURF2 and inhibiting its SMAD7-mediated degradation. Involved in glucose homeostasis through induction of glucagon secretion at low glucose levels. Promotes dermal fibroblast proliferation and wound repair. Regulates KDELR1-mediated retention of HSP90B1/gp96 in the endoplasmic reticulum. Plays a role in angiogenesis by inducing endothelial cell migration at low concentrations and endothelian cell apoptosis at high concentrations. Induces maturation of dendritic cells and monocyte cell adhesion. Modulates endothelial cell responses by degrading HIF-1A through interaction with PSMA7. This is Aminoacyl tRNA synthase complex-interacting multifunctional protein 1 (Aimp1) from Mus musculus (Mouse).